A 173-amino-acid polypeptide reads, in one-letter code: Probable WRKY transcription factor 50 (173 aa).

A DNA-binding region (WRKY) is located at residues serine 107–methionine 172.

This sequence belongs to the WRKY group II-c family.

The protein resides in the nucleus. Functionally, transcription factor. Interacts specifically with the W box (5'-(T)TGAC[CT]-3'), a frequently occurring elicitor-responsive cis-acting element. The polypeptide is Probable WRKY transcription factor 50 (WRKY50) (Arabidopsis thaliana (Mouse-ear cress)).